The sequence spans 320 residues: ATP-dependent 6-phosphofructokinase (320 aa).

Residue Gly12 coordinates ATP. ADP is bound at residue 22–26 (RGVVR). ATP contacts are provided by residues 73–74 (RF) and 103–106 (GDGS). Asp104 serves as a coordination point for Mg(2+). Position 126 to 128 (126 to 128 (TID)) interacts with substrate. The Proton acceptor role is filled by Asp128. Arg155 contacts ADP. Residues Arg163 and 170-172 (MGR) contribute to the substrate site. ADP-binding positions include 186–188 (GCE), Lys212, and 214–216 (KKH). Substrate contacts are provided by residues Glu223, Arg244, and 250–253 (HIQR).

This sequence belongs to the phosphofructokinase type A (PFKA) family. ATP-dependent PFK group I subfamily. Prokaryotic clade 'B1' sub-subfamily. Homotetramer. Mg(2+) is required as a cofactor.

The protein resides in the cytoplasm. It carries out the reaction beta-D-fructose 6-phosphate + ATP = beta-D-fructose 1,6-bisphosphate + ADP + H(+). It functions in the pathway carbohydrate degradation; glycolysis; D-glyceraldehyde 3-phosphate and glycerone phosphate from D-glucose: step 3/4. Its activity is regulated as follows. Allosterically activated by ADP and other diphosphonucleosides, and allosterically inhibited by phosphoenolpyruvate. Catalyzes the phosphorylation of D-fructose 6-phosphate to fructose 1,6-bisphosphate by ATP, the first committing step of glycolysis. The chain is ATP-dependent 6-phosphofructokinase from Aliivibrio salmonicida (strain LFI1238) (Vibrio salmonicida (strain LFI1238)).